Reading from the N-terminus, the 202-residue chain is UPF0102 protein Dde_1093 (202 aa).

Belongs to the UPF0102 family.

This Oleidesulfovibrio alaskensis (strain ATCC BAA-1058 / DSM 17464 / G20) (Desulfovibrio alaskensis) protein is UPF0102 protein Dde_1093.